We begin with the raw amino-acid sequence, 486 residues long: Hexokinase-2 (486 aa).

At serine 15 the chain carries Phosphoserine. One can recognise a Hexokinase domain in the interval lysine 21–alanine 469. Threonine 38 is subject to Phosphothreonine. The hexokinase small subdomain stretch occupies residues threonine 75 to isoleucine 209. Residues aspartate 86–asparagine 91 and lysine 111 each bind ATP. Serine 158 is subject to Phosphoserine. Substrate contacts are provided by residues serine 158, threonine 175–lysine 176, asparagine 210–aspartate 211, and asparagine 237. The segment at asparagine 210–aspartate 458 is hexokinase large subdomain. Serine 245 carries the post-translational modification Phosphoserine. Position 269 (glutamate 269) interacts with substrate. Serine 272 carries the post-translational modification Phosphoserine. Glutamate 302 contributes to the substrate binding site. ATP contacts are provided by residues glycine 307–tyrosine 308, threonine 344–alanine 348, and serine 419–arginine 423.

Belongs to the hexokinase family. Homodimer.

The catalysed reaction is a D-hexose + ATP = a D-hexose 6-phosphate + ADP + H(+). The enzyme catalyses D-fructose + ATP = D-fructose 6-phosphate + ADP + H(+). It catalyses the reaction D-glucose + ATP = D-glucose 6-phosphate + ADP + H(+). It participates in carbohydrate metabolism; hexose metabolism. It functions in the pathway carbohydrate degradation; glycolysis; D-glyceraldehyde 3-phosphate and glycerone phosphate from D-glucose: step 1/4. Subject to allosteric control. Substrate inhibition by ATP. Catalyzes the phosphorylation of hexose, such as D-glucose and D-fructose, to hexose 6-phosphate (D-glucose 6-phosphate and D-fructose 6-phosphate, respectively). Mediates the initial step of glycolysis by catalyzing phosphorylation of D-glucose to D-glucose 6-phosphate. This Saccharomyces cerevisiae (strain ATCC 204508 / S288c) (Baker's yeast) protein is Hexokinase-2 (HXK2).